The sequence spans 65 residues: Beta-defensin 106A (65 aa).

The signal sequence occupies residues methionine 1 to glutamate 20. Intrachain disulfides connect cysteine 26–cysteine 53, cysteine 33–cysteine 47, and cysteine 37–cysteine 54.

Belongs to the beta-defensin family. In terms of assembly, monomer. Interacts with CCR2 (via extracellular N-terminal region); this interaction may preferentially require specific tyrosine sulfation on CCR2.

It localises to the secreted. The protein resides in the membrane. Has antibacterial activity. Acts as a ligand for C-C chemokine receptor CCR2. The chain is Beta-defensin 106A (DEFB106A) from Pongo pygmaeus (Bornean orangutan).